Consider the following 78-residue polypeptide: DNA-directed RNA polymerase subunit omega (78 aa).

The protein belongs to the RNA polymerase subunit omega family. In terms of assembly, the RNAP catalytic core consists of 2 alpha, 1 beta, 1 beta' and 1 omega subunit. When a sigma factor is associated with the core the holoenzyme is formed, which can initiate transcription.

The catalysed reaction is RNA(n) + a ribonucleoside 5'-triphosphate = RNA(n+1) + diphosphate. Its function is as follows. Promotes RNA polymerase assembly. Latches the N- and C-terminal regions of the beta' subunit thereby facilitating its interaction with the beta and alpha subunits. In Desulfovibrio desulfuricans (strain ATCC 27774 / DSM 6949 / MB), this protein is DNA-directed RNA polymerase subunit omega.